The sequence spans 163 residues: NADH-quinone oxidoreductase subunit I (163 aa).

2 consecutive 4Fe-4S ferredoxin-type domains span residues 53-83 (LRRYPNGEERCIACKLCEAICPAQAITIEAG) and 94-123 (VRYDIDMVKCIYCGFCQEACPVDAIVEGPN). Residues cysteine 63, cysteine 66, cysteine 69, cysteine 73, cysteine 103, cysteine 106, cysteine 109, and cysteine 113 each coordinate [4Fe-4S] cluster.

It belongs to the complex I 23 kDa subunit family. In terms of assembly, NDH-1 is composed of 14 different subunits. Subunits NuoA, H, J, K, L, M, N constitute the membrane sector of the complex. [4Fe-4S] cluster is required as a cofactor.

It is found in the cell inner membrane. It carries out the reaction a quinone + NADH + 5 H(+)(in) = a quinol + NAD(+) + 4 H(+)(out). Its function is as follows. NDH-1 shuttles electrons from NADH, via FMN and iron-sulfur (Fe-S) centers, to quinones in the respiratory chain. The immediate electron acceptor for the enzyme in this species is believed to be ubiquinone. Couples the redox reaction to proton translocation (for every two electrons transferred, four hydrogen ions are translocated across the cytoplasmic membrane), and thus conserves the redox energy in a proton gradient. This is NADH-quinone oxidoreductase subunit I from Brucella canis (strain ATCC 23365 / NCTC 10854 / RM-666).